Consider the following 881-residue polypeptide: Translation initiation factor IF-2 (881 aa).

Disordered stretches follow at residues 31-147 (KLAQ…TKVP) and 165-291 (SVVG…HYDE). The segment covering 42-55 (NSSEKPSAKVAEKV) has biased composition (basic and acidic residues). Positions 68–77 (ATPESVSSET) are enriched in polar residues. Acidic residues predominate over residues 114–128 (VEEEIASSTDSEPEV). A compositionally biased stretch (basic and acidic residues) spans 191–203 (PKKEDKPAPKERS). The segment covering 204–233 (GQAQAKPQQSSEASSENKPHSPNNNRSSQP) has biased composition (polar residues). Residues 235 to 267 (YRRDTSKKPGSDFRDRAKKDDNPKAFTGRDRYG) are compositionally biased toward basic and acidic residues. The span at 278–287 (RKKRVQKTKK) shows a compositional bias: basic residues. The tr-type G domain occupies 387-556 (IRPPIVAFMG…ALQAEVLELK (170 aa)). Positions 396–403 (GHVDHGKT) are G1. Position 396-403 (396-403 (GHVDHGKT)) interacts with GTP. Positions 421 to 425 (AITQH) are G2. Residues 442 to 445 (DTPG) are G3. Residues 442–446 (DTPGH) and 496–499 (NKCD) each bind GTP. Residues 496-499 (NKCD) form a G4 region. The segment at 532–534 (SAK) is G5.

It belongs to the TRAFAC class translation factor GTPase superfamily. Classic translation factor GTPase family. IF-2 subfamily.

It localises to the cytoplasm. One of the essential components for the initiation of protein synthesis. Protects formylmethionyl-tRNA from spontaneous hydrolysis and promotes its binding to the 30S ribosomal subunits. Also involved in the hydrolysis of GTP during the formation of the 70S ribosomal complex. The sequence is that of Translation initiation factor IF-2 from Chlamydia felis (strain Fe/C-56) (Chlamydophila felis).